Consider the following 97-residue polypeptide: YcgL domain-containing protein PFL_1496 (97 aa).

One can recognise a YcgL domain in the interval 3 to 87 (RICSIYKSPR…AEDEYIEHLP (85 aa)).

The sequence is that of YcgL domain-containing protein PFL_1496 from Pseudomonas fluorescens (strain ATCC BAA-477 / NRRL B-23932 / Pf-5).